A 684-amino-acid polypeptide reads, in one-letter code: Putative glucan endo-1,3-beta-glucosidase btgC (684 aa).

Polar residues predominate over residues 1 to 10 (MAGVNRSFSY). 3 disordered regions span residues 1–38 (MAGVNRSFSYSRGDDALLRDDEREISPLRSAEDGLYST), 124–143 (AERDFNTTGSDNPYIPAPPD), and 157–182 (DSYSSHTGLGAGAPFAEHSTPGTTPS). Residues 1–302 (MAGVNRSFSY…HIIGGGSRKR (302 aa)) are Cytoplasmic-facing. Basic and acidic residues predominate over residues 12–32 (RGDDALLRDDEREISPLRSAE). Residues 303 to 323 (GWIVGLILAAVIVAAIVGGAV) traverse the membrane as a helical; Signal-anchor for type II membrane protein segment. Topologically, residues 324–684 (GGILGHQEHD…IPDCGGKTIT (361 aa)) are extracellular. Residues 330–358 (QEHDGDTSSSSSSSSSSGTGSGGSDKGDG) form a disordered region. A compositionally biased stretch (low complexity) spans 336-347 (TSSSSSSSSSSG). N404, N427, N455, and N474 each carry an N-linked (GlcNAc...) asparagine glycan. Residue E487 is the Proton donor of the active site. E586 (nucleophile) is an active-site residue. N631 carries an N-linked (GlcNAc...) asparagine glycan.

This sequence belongs to the glycosyl hydrolase 17 family.

Its subcellular location is the cell membrane. The enzyme catalyses Hydrolysis of (1-&gt;3)-beta-D-glucosidic linkages in (1-&gt;3)-beta-D-glucans.. In terms of biological role, glucanases play a role in cell expansion during growth, in cell-cell fusion during mating, and in spore release during sporulation. This enzyme may be involved in beta-glucan degradation. Active on laminarin and lichenan. In Aspergillus niger (strain ATCC MYA-4892 / CBS 513.88 / FGSC A1513), this protein is Putative glucan endo-1,3-beta-glucosidase btgC (btgC).